A 1088-amino-acid chain; its full sequence is Extended synaptotagmin-1 (1088 aa).

N-acetylmethionine is present on Met1. Residues 1 to 30 (MERSPEEGAGPEPSGQSPATDSTRERDGGS) lie on the Cytoplasmic side of the membrane. The segment at 1 to 38 (MERSPEEGAGPEPSGQSPATDSTRERDGGSGVPPAGPG) is disordered. A helical transmembrane segment spans residues 31–51 (GVPPAGPGAASEALAVLTSFG). The Lumenal segment spans residues 52 to 54 (RRL). A helical membrane pass occupies residues 55-75 (LVLVPVYLAGAAGLSVGFVLF). Topologically, residues 76-1088 (GLALYLGWRR…LIDDRDKGGS (1013 aa)) are cytoplasmic. An SMP-LTD domain is found at 127–305 (DVEKAEWLNK…LPNRLLVPLV (179 aa)). C2 domains are found at residues 304-425 (LVPD…DNWY), 446-572 (DAEK…QLSS), 618-740 (DAPP…DEWL), and 771-888 (QVNS…ALSG). Phosphoserine; by CDK5 is present on Ser316. Lys336, Asp337, Asp349, Asp396, Asp398, Asp400, Asp402, and Asp403 together coordinate Ca(2+). A disordered region spans residues 599–630 (TEPGAQDWDSESPETGSSVDAPPRPYHTTPNS). Position 806 is an N6-acetyllysine (Lys806). Position 809 is a phosphoserine (Ser809). Residues 911 to 930 (HSHSSSSLNEEPEVLGDPTH) form a disordered region. Residues Ser933 and Ser947 each carry the phosphoserine modification. Residues 955-1077 (PLGQVKLTVW…DLSQGAAQWY (123 aa)) form the C2 5 domain. A Phosphotyrosine modification is found at Tyr993. Residues 1002–1009 (KNRGTKRK) are required for phosphatidylinositol 4,5-bisphosphate-dependent location at the cell membrane.

The protein belongs to the extended synaptotagmin family. As to quaternary structure, interacts with ESYT2 and ESYT3. Interacts with ADGRD1; inhibiting the G-protein-coupled receptor activity of ADGRD1. Interaction with ADGRD1 is abolished when cytosolic calcium increases, relieving ADGRD1 G-protein-coupled receptor activity. Interacts (phosphorylated form) with SLC2A4. In terms of processing, phosphorylated on Ser residues in insulin-treated adipocytes (in vitro); this promotes interaction with SLC2A4. In terms of tissue distribution, ubiquitously expressed with a higher expression in spleen and white adipose tissue.

Its subcellular location is the endoplasmic reticulum membrane. The protein resides in the cell membrane. Binds calcium (via the C2 domains) and translocates to sites of contact between the endoplasmic reticulum and the cell membrane in response to increased cytosolic calcium levels. Helps tether the endoplasmic reticulum to the cell membrane and promotes the formation of appositions between the endoplasmic reticulum and the cell membrane. Acts as an inhibitor of ADGRD1 G-protein-coupled receptor activity in absence of cytosolic calcium. Binds glycerophospholipids in a barrel-like domain and may play a role in cellular lipid transport. This Rattus norvegicus (Rat) protein is Extended synaptotagmin-1 (Esyt1).